We begin with the raw amino-acid sequence, 267 residues long: NAD kinase 2 (267 aa).

The Proton acceptor role is filled by D52. Residues 52 to 53 (DG), 124 to 125 (NE), R151, D153, 164 to 169 (TGYNKS), and A188 each bind NAD(+).

The protein belongs to the NAD kinase family. A divalent metal cation is required as a cofactor.

It is found in the cytoplasm. The enzyme catalyses NAD(+) + ATP = ADP + NADP(+) + H(+). Its function is as follows. Involved in the regulation of the intracellular balance of NAD and NADP, and is a key enzyme in the biosynthesis of NADP. Catalyzes specifically the phosphorylation on 2'-hydroxyl of the adenosine moiety of NAD to yield NADP. This Geobacillus kaustophilus (strain HTA426) protein is NAD kinase 2.